The sequence spans 194 residues: Thymidine kinase (194 aa).

ATP contacts are provided by residues 15–22 and 88–91; these read GSMFSGKS and DEVQ. E89 (proton acceptor) is an active-site residue. The Zn(2+) site is built by C145, C148, C183, and C186.

The protein belongs to the thymidine kinase family. Homotetramer.

The protein localises to the cytoplasm. The catalysed reaction is thymidine + ATP = dTMP + ADP + H(+). This chain is Thymidine kinase, found in Bacillus cereus (strain AH820).